A 225-amino-acid chain; its full sequence is Protein-L-isoaspartate O-methyltransferase (225 aa).

Serine 75 is a catalytic residue.

The protein belongs to the methyltransferase superfamily. L-isoaspartyl/D-aspartyl protein methyltransferase family.

The protein resides in the cytoplasm. It carries out the reaction [protein]-L-isoaspartate + S-adenosyl-L-methionine = [protein]-L-isoaspartate alpha-methyl ester + S-adenosyl-L-homocysteine. In terms of biological role, catalyzes the methyl esterification of L-isoaspartyl residues in peptides and proteins that result from spontaneous decomposition of normal L-aspartyl and L-asparaginyl residues. It plays a role in the repair and/or degradation of damaged proteins. The chain is Protein-L-isoaspartate O-methyltransferase from Xanthomonas euvesicatoria pv. vesicatoria (strain 85-10) (Xanthomonas campestris pv. vesicatoria).